We begin with the raw amino-acid sequence, 379 residues long: Tryptophan 2,3-dioxygenase (379 aa).

Residues 57-61 (FIITH) and R128 each bind substrate. Position 312 (H312) interacts with heme. T327 is a binding site for substrate.

The protein belongs to the tryptophan 2,3-dioxygenase family. As to quaternary structure, homotetramer. Dimer of dimers. Heme is required as a cofactor.

The enzyme catalyses L-tryptophan + O2 = N-formyl-L-kynurenine. The protein operates within amino-acid degradation; L-tryptophan degradation via kynurenine pathway; L-kynurenine from L-tryptophan: step 1/2. Its pathway is pigment biosynthesis; ommochrome biosynthesis. Functionally, heme-dependent dioxygenase that catalyzes the oxidative cleavage of the L-tryptophan (L-Trp) pyrrole ring and converts L-tryptophan to N-formyl-L-kynurenine. Catalyzes the oxidative cleavage of the indole moiety. This chain is Tryptophan 2,3-dioxygenase, found in Drosophila erecta (Fruit fly).